We begin with the raw amino-acid sequence, 874 residues long: Trimodular acetylaranotin synthesis protein ataIMG (874 aa).

The segment at methionine 1–isoleucine 339 is aminotransferase ataI. The disordered stretch occupies residues arginine 20–isoleucine 39. Residues phenylalanine 23 to threonine 37 show a composition bias toward polar residues. Residues serine 340–threonine 668 form an O-methyltransferase ataM region. An S-adenosyl-L-methionine-binding site is contributed by aspartate 625. Positions leucine 669 to histidine 874 are glutathione S-transferase ataG. In terms of domain architecture, GST N-terminal spans lysine 699–threonine 766. One can recognise a GST C-terminal domain in the interval aspartate 739–histidine 874.

This sequence in the N-terminal section; belongs to the class-I pyridoxal-phosphate-dependent aminotransferase family. In the 2nd section; belongs to the class I-like SAM-binding methyltransferase superfamily. Cation-independent O-methyltransferase family. The protein in the C-terminal section; belongs to the GST superfamily. Pyridoxal 5'-phosphate is required as a cofactor.

It catalyses the reaction RX + glutathione = an S-substituted glutathione + a halide anion + H(+). Its pathway is mycotoxin biosynthesis. Its function is as follows. Trimodular acetylaranotin synthesis protein; part of the gene cluster that mediates the biosynthesis of acetylaranotin, a member of the epipolythiodioxopiperazine (ETP) class of toxins characterized by a disulfide-bridged cyclic dipeptide. The first step of acetylaranotin biosynthesis is performed by the NRPS ataP which produces diketopiperazine cyclo-L-Phe-L-Phe via the condensation of 2 phenylalanines (L-Phe). The ataC domain of ataTC then catalyzes the formation of bishydroxylation of cyclo-L-Phe-L-Phe. The glutathione S-transferase domain ataG in ataIMG further catalyzes the conjugation of two glutathiones to the bishydroxylated intermediate. Next, the dipeptidase ataJ removes the Glu residues. The following step is performed by the carbon sulfur lyase domain ataI of ataIMG which may convert the bis-cysteinyl adduct to yield an epidithiol intermediate. The ataT domain from ataTC then catalyzes the oxidation of the free dithiols, followed by a cyclization step catalyzed by the cytochrome P450 ataF. AtaF probably acts as an epoxidase to promote a dual epoxidation formation at C8 and C9 along with C8' and C9', followed by the spontaneous nucleophilic attack of the amide nitrogens N10 and N10' to yield an intermediate with the pyrrolidine partial structure. The final steps of acetylaranotin biosynthesis involve the acetylation and ring rearrangement of an epitetrathiodiketopiperazine intermediate to produce acetylaranotin. AtaH probably catalyzes the acetylation of epitetrathiodiketopiperazine to produce a diacetate and ataY is responsible for the formation of the dihydrooxepin moiety that converts the diacetate intermediate to acetylaranotin via acetylapoaranotin. Both enzymes could function independently in the absence of the other. The acetylaranotin bis-thiomethyltransferase ataS located outside of acetylaranotin gene cluster is the main thiomethyltransferase responsible for converting acetylaranotin and its related intermediates to their methylated forms. This chain is Trimodular acetylaranotin synthesis protein ataIMG, found in Aspergillus terreus (strain NIH 2624 / FGSC A1156).